We begin with the raw amino-acid sequence, 383 residues long: ERCC4 domain-containing protein EP364R (383 aa).

Residues 3 to 101 form the ERCC4 domain; that stretch reads FLVADHREHH…QLYFFVEGPA (99 aa). Positions 336-367 are disordered; it reads LHKVSDEASENASHDASENASDKVSSPTGHQT. Residues 347-356 show a composition bias toward basic and acidic residues; the sequence is ASHDASENAS. Positions 357–367 are enriched in polar residues; the sequence is DKVSSPTGHQT.

It belongs to the asfivirus EP364R family.

In terms of biological role, plays a role in the inhibition of type I interferon signaling pathway. Mechanistically, specifically interacts with 2',3'-cGAMP and cleaves it via its phosphodiesterase activity. In turn, prevents 2',3'-cGAMP interaction with host ER-resident STING1 leading to inhibition of downstream signaling pathway and type I interferon production. This is ERCC4 domain-containing protein EP364R from Ornithodoros (relapsing fever ticks).